The following is a 548-amino-acid chain: Membrane protein insertase YidC (548 aa).

A helical transmembrane segment spans residues 6–26 (NLLVIALLFVSFMIWQAWEQD). The segment at 28–58 (NPQPQQQQTTQTTTTAAGSAADQGVPASGQG) is disordered. Positions 29 to 42 (PQPQQQQTTQTTTT) are enriched in low complexity. The next 4 helical transmembrane spans lie at 350 to 370 (FLGN…GIMY), 420 to 440 (LGGC…YYML), 458 to 478 (LSAQ…MFFI), and 499 to 519 (PVIF…YYIV).

Belongs to the OXA1/ALB3/YidC family. Type 1 subfamily. Interacts with the Sec translocase complex via SecD. Specifically interacts with transmembrane segments of nascent integral membrane proteins during membrane integration.

Its subcellular location is the cell inner membrane. In terms of biological role, required for the insertion and/or proper folding and/or complex formation of integral membrane proteins into the membrane. Involved in integration of membrane proteins that insert both dependently and independently of the Sec translocase complex, as well as at least some lipoproteins. Aids folding of multispanning membrane proteins. This Enterobacter sp. (strain 638) protein is Membrane protein insertase YidC.